The following is a 395-amino-acid chain: MSTSSNASHWDIFCTVVDNYGDIGVTWRLAKQLVNEYHIPIILWVDDLNSFSHILPTLNPKLVSQCFNGVIINHWTTPLAVPYLPGKVLIEAFACELPDEVKLQLATLHKTAPQAVPLWLNLEYLSAEDWVDGCHGLPSMQVSGIKKYFYFPGFTPKTGGLICERELFAERDAWQQDPANKLQLFESLGLKDIQAQDSVFSIFSYETDSLPALCELWQARAKNDAKIHALLPKGRSLNSLQHLLPCPVDALMPGQQIKLGDLTLHILPMTDQQGFDRLLWSCDVNIVRGEDSFLRAQWAAKPFIWHIYPQEDDYHLIKLEAFIRLYCDNLAPDIADTWSKLNFAFSQGQQSAVKTHWQNLNPVSLPLLQHAKEWPIDAINAADLATRLVQFVKKS.

DTDP-beta-L-rhamnose-binding positions include 19-22, tyrosine 205, glutamine 272, and 288-292; these read NYGD and RGEDS. Residue aspartate 22 is the Proton acceptor of the active site. Glutamate 290 is a catalytic residue.

The protein belongs to the glycosyltransferase 104 family.

The catalysed reaction is dTDP-beta-L-rhamnose + L-arginyl-[protein] = N(omega)-(alpha-L-rhamnosyl)-L-arginyl-[protein] + dTDP + H(+). Protein-arginine rhamnosyltransferase that catalyzes the transfer of a single rhamnose to elongation factor P (EF-P) on 'Lys-32', a modification required for EF-P-dependent rescue of polyproline stalled ribosomes. This is Protein-arginine rhamnosyltransferase from Shewanella oneidensis (strain ATCC 700550 / JCM 31522 / CIP 106686 / LMG 19005 / NCIMB 14063 / MR-1).